The following is a 342-amino-acid chain: Aquaporin-7 (342 aa).

Residues Met1–Glu36 lie on the Cytoplasmic side of the membrane. Ser20 is subject to Phosphoserine. Residues Phe37–Ser54 form a helical membrane-spanning segment. Residues Val55–Tyr67 lie on the Extracellular side of the membrane. Residues Leu68–Ala85 traverse the membrane as a helical segment. Residues Gly86–Ser89 lie on the Cytoplasmic side of the membrane. An intramembrane region (discontinuously helical) is located at residues Gly90–Ala103. Positions Asn94–Ala96 match the NPA 1 motif. Residues Leu104–Lys111 lie on the Cytoplasmic side of the membrane. A helical membrane pass occupies residues Phe112–Ser132. Topologically, residues Leu133–Arg170 are extracellular. The chain crosses the membrane as a helical span at residues Gly171–Ala188. Topologically, residues Ile189–Gly200 are cytoplasmic. A helical membrane pass occupies residues Thr201–Leu217. The Extracellular segment spans residues Gly218–Thr221. The segment at residues Gly222–Ile235 is an intramembrane region (discontinuously helical). The NPA 2 signature appears at Asn226–Ser228. The Extracellular segment spans residues Phe236–Trp253. The helical transmembrane segment at Trp254–Phe275 threads the bilayer. The Cytoplasmic segment spans residues Ile276–Phe342.

This sequence belongs to the MIP/aquaporin (TC 1.A.8) family. Homotetramer; each monomer provides an independent glycerol/water pore. Two homotetramers on opposing membranes can dimerize, forming a cell-cell junction. Interacts with PLIN1. Phosphorylation by PKA could prevent the interaction with PLIN1. Detected in the sperm head (at protein level). Detected in white adipose tissue.

The protein resides in the cell membrane. Its subcellular location is the cytoplasmic vesicle membrane. It localises to the lipid droplet. The enzyme catalyses glycerol(in) = glycerol(out). It carries out the reaction H2O(in) = H2O(out). The catalysed reaction is urea(in) = urea(out). With respect to regulation, glycerol transport is regulated by pH, with the porin being permeable to glycerol at pH 7.4 but not at pH 5.5. Water permeability, however, is not influenced by pH. Inhibited by mercury ions. Functionally, aquaglyceroporins form homotetrameric transmembrane channels, with each monomer independently mediating glycerol and water transport across the plasma membrane along their osmotic gradient. Could also be permeable to urea. Mediates the efflux of glycerol, formed upon triglyceride hydrolysis, to avoid its accumulation in adipocytes and to make it available to other tissues. In the kidney, mediates the reabsorption of glycerol, preventing its loss in urine, again participating to energy homeostasis. In pancreatic beta cells, it also mediates the efflux of glycerol, regulating its intracellular levels. This Homo sapiens (Human) protein is Aquaporin-7.